The primary structure comprises 244 residues: Thiol S-methyltransferase TMT1B (244 aa).

The signal sequence occupies residues 1-23 (MDALVLFLQLLVLLLTLPLHLLA).

The protein belongs to the methyltransferase superfamily.

The protein localises to the endoplasmic reticulum membrane. The protein resides in the lipid droplet. It localises to the microsome. Its subcellular location is the cytoplasm. It is found in the cytosol. The enzyme catalyses a thiol + S-adenosyl-L-methionine = a methyl thioether + S-adenosyl-L-homocysteine + H(+). Its function is as follows. Thiol S-methyltransferase that catalyzes the transfer of a methyl group from S-adenosyl-L-methionine to alkyl and phenolic thiol-containing acceptor substrates. Together with TMT1B accounts for most of S-thiol methylation activity in the endoplasmic reticulum of hepatocytes. Selectively methylates S-centered nucleophiles from metabolites such as hydrogen sulfide and dithiothreitol. This chain is Thiol S-methyltransferase TMT1B, found in Mus musculus (Mouse).